Here is a 517-residue protein sequence, read N- to C-terminus: Histone H4 transcription factor (517 aa).

C2H2-type zinc fingers lie at residues 15–39 (LQCE…VTQH), 129–153 (FLCL…VEAH), and 169–193 (VLCG…LRSH). The C2H2-type 4; degenerate zinc-finger motif lies at 199 to 221 (VACPTCGGMFANNTKFLDHIRRQ). 5 consecutive C2H2-type zinc fingers follow at residues 229–251 (FQCS…MRNH), 255–278 (YKCP…RFRH), 284–306 (FKCD…LDTH), 312–337 (YRCD…RKVH), and 345–368 (YKCH…RKKH). The segment at 373 to 517 (PSGHPRFRYK…IAEEPEIQMV (145 aa)) is interaction with NPAT. The required for activation of histone H4 transcription and contributes to DNA-binding stretch occupies residues 374 to 407 (SGHPRFRYKEHEDGYMRLQLVRYESVELTQQLLR). A disordered region spans residues 431–460 (TVPGEPGRKEEEEEGKGSEGTALSASQDNP). The span at 451–460 (TALSASQDNP) shows a compositional bias: polar residues.

In terms of assembly, binds MBD2 and a histone deacetylase complex. Interacts with NPAT. In terms of processing, ubiquitinated. Ubiquitination may lead to proteasome-mediated degradation. In terms of tissue distribution, ubiquitous. Highly expressed in brain, heart, skeletal muscle, spleen, kidney, small intestine, placenta and liver.

It is found in the nucleus. Its function is as follows. Transcriptional repressor that binds to the consensus sequence 5'-CGGACGTT-3' and to the RB1 promoter. Transcriptional activator that promotes histone H4 gene transcription at the G1/S phase transition in conjunction with NPAT. Also activates transcription of the ATM and PRKDC genes. Autoregulates its expression by associating with its own promoter. The protein is Histone H4 transcription factor (HINFP) of Homo sapiens (Human).